Here is a 193-residue protein sequence, read N- to C-terminus: Ion-translocating oxidoreductase complex subunit A (193 aa).

6 consecutive transmembrane segments (helical) span residues Ala5–Leu25, Ile39–Val59, Phe62–Ala82, Leu102–Leu122, Thr134–Ile154, and Ser171–Val191.

It belongs to the NqrDE/RnfAE family. The complex is composed of six subunits: RnfA, RnfB, RnfC, RnfD, RnfE and RnfG.

Its subcellular location is the cell inner membrane. Part of a membrane-bound complex that couples electron transfer with translocation of ions across the membrane. The chain is Ion-translocating oxidoreductase complex subunit A from Pectobacterium carotovorum subsp. carotovorum (strain PC1).